Here is a 344-residue protein sequence, read N- to C-terminus: Phenylalanine--tRNA ligase alpha subunit (344 aa).

Residue Glu269 coordinates Mg(2+).

It belongs to the class-II aminoacyl-tRNA synthetase family. Phe-tRNA synthetase alpha subunit type 1 subfamily. In terms of assembly, tetramer of two alpha and two beta subunits. Mg(2+) serves as cofactor.

Its subcellular location is the cytoplasm. The enzyme catalyses tRNA(Phe) + L-phenylalanine + ATP = L-phenylalanyl-tRNA(Phe) + AMP + diphosphate + H(+). The sequence is that of Phenylalanine--tRNA ligase alpha subunit from Ralstonia nicotianae (strain ATCC BAA-1114 / GMI1000) (Ralstonia solanacearum).